Reading from the N-terminus, the 199-residue chain is Protein GrpE (199 aa).

Residues 1-24 (MSKQNKKDWKKFRDEHKEEHKVEN) show a composition bias toward basic and acidic residues. Residues 1-52 (MSKQNKKDWKKFRDEHKEEHKVENEILEEETDEESQHQEPALGHPSYTALEE) are disordered.

It belongs to the GrpE family. Homodimer.

It localises to the cytoplasm. Functionally, participates actively in the response to hyperosmotic and heat shock by preventing the aggregation of stress-denatured proteins, in association with DnaK and GrpE. It is the nucleotide exchange factor for DnaK and may function as a thermosensor. Unfolded proteins bind initially to DnaJ; upon interaction with the DnaJ-bound protein, DnaK hydrolyzes its bound ATP, resulting in the formation of a stable complex. GrpE releases ADP from DnaK; ATP binding to DnaK triggers the release of the substrate protein, thus completing the reaction cycle. Several rounds of ATP-dependent interactions between DnaJ, DnaK and GrpE are required for fully efficient folding. The sequence is that of Protein GrpE from Legionella pneumophila (strain Lens).